The primary structure comprises 132 residues: UPF0299 membrane protein YohJ (132 aa).

Helical transmembrane passes span 7 to 27 (IIWQ…AGIF), 31 to 51 (LLPV…VLLA), 63 to 83 (GCYV…VGVM), and 93 to 113 (FGPV…VVSW).

The protein belongs to the UPF0299 family.

It is found in the cell inner membrane. The sequence is that of UPF0299 membrane protein YohJ from Shigella boydii serotype 4 (strain Sb227).